The primary structure comprises 1079 residues: Electrogenic sodium bicarbonate cotransporter 1 (1079 aa).

A required for interaction with AHCYL1 region spans residues Met-1 to Glu-62. The Cytoplasmic segment spans residues Met-1–Asn-466. Glu-21 carries the phosphoserine modification. The residue at position 30 (Tyr-30) is a Phosphotyrosine. Positions Tyr-39–Lys-52 are enriched in basic residues. A disordered region spans residues Tyr-39 to Ser-78. The segment covering Glu-53–Val-70 has biased composition (basic and acidic residues). Ser-61, Ser-65, Ser-68, Ser-223, Ser-232, Ser-233, and Ser-245 each carry phosphoserine. The segment at Ser-235–Glu-266 is disordered. Phosphothreonine occurs at positions 249 and 254. The segment covering Arg-251 to Asp-260 has biased composition (polar residues). Phosphoserine occurs at positions 256, 257, and 262. The helical transmembrane segment at Ile-467–Leu-491 threads the bilayer. The Extracellular portion of the chain corresponds to Gly-492–Val-501. Residues Leu-502 to Gly-520 traverse the membrane as a helical segment. Residue Gln-521 is a topological domain, cytoplasmic. The discontinuously helical transmembrane segment at Pro-522–Phe-542 threads the bilayer. The Extracellular segment spans residues Ser-543 to Tyr-550. Residues Leu-551–Thr-571 form a helical membrane-spanning segment. At Asp-572–Glu-585 the chain is on the cytoplasmic side. A helical membrane pass occupies residues Glu-586–Asp-609. The Extracellular segment spans residues Tyr-610–Ile-692. Residues Thr-693 to Met-710 form a helical membrane-spanning segment. Residues Lys-711 to Lys-725 lie on the Cytoplasmic side of the membrane. Residues Leu-726–Leu-745 form a helical membrane-spanning segment. Residues Val-746–Trp-779 lie on the Extracellular side of the membrane. Residues Val-748–Trp-779 are interaction with CA4. A helical membrane pass occupies residues Val-780–Asn-807. Residues Arg-808–Tyr-819 lie on the Cytoplasmic side of the membrane. Residues His-820–Met-836 form a helical membrane-spanning segment. Ala-837 is a topological domain (extracellular). A discontinuously helical transmembrane segment spans residues Leu-838–Leu-855. Residues Lys-856–Arg-877 are Cytoplasmic-facing. Residues Val-878 to Ala-894 traverse the membrane as a helical segment. Topologically, residues Pro-895–Pro-901 are extracellular. The helical transmembrane segment at Met-902–Asn-918 threads the bilayer. At Gly-919–Cys-960 the chain is on the cytoplasmic side. Residues Leu-961–Val-986 constitute an intramembrane region (discontinuously helical). Residues Arg-987 to Cys-1079 are Cytoplasmic-facing. The tract at residues Leu-1002–Asp-1004 is CA2-binding. The segment at Lys-1012 to Cys-1079 is disordered. Phosphoserine is present on residues Ser-1026 and Ser-1029. The CA2-binding stretch occupies residues Asp-1030–Asp-1033. Residues Ser-1034 and Ser-1044 each carry the phosphoserine modification. Residues Phe-1057–Ser-1059 are required for basolateral targeting. A compositionally biased stretch (basic and acidic residues) spans Lys-1062 to Cys-1079. Phosphoserine is present on Ser-1069.

Belongs to the anion exchanger (TC 2.A.31) family. In terms of assembly, homodimer. Interacts with CA2/carbonic anhydrase 2 and CA4/carbonic anhydrase 4 which may regulate transporter activity. Isoform 1 but not isoform 2 interacts with AHCYL1 (via PEST domain when phosphorylated); the interaction increases SLC4A4 isoform 1 activity. Interacts with AHCYL2. Post-translationally, phosphorylation of Ser-1026 by PKA increases the binding of CA2 and changes the Na(+):HCO3(-) stoichiometry of the transporter from 3:1 to 2:1. Phosphorylated in presence of STK39 and dephosphorylated in presence of PP1 phosphatase; phosphorylation seems to inhibit SLC4A4 activity. N-glycosylated. May not be necessary for the transporter basic functions. As to expression, isoform 1 is specifically expressed in pancreatic ducts and acini. Also expressed in parotid acinar cells and in the colonic crypts.

Its subcellular location is the basolateral cell membrane. The protein localises to the cell membrane. It catalyses the reaction 2 hydrogencarbonate(out) + Na(+)(out) = 2 hydrogencarbonate(in) + Na(+)(in). The catalysed reaction is 3 hydrogencarbonate(out) + Na(+)(out) = 3 hydrogencarbonate(in) + Na(+)(in). Activated by cyclic AMP. Its function is as follows. Electrogenic sodium/bicarbonate cotransporter with a Na(+):HCO3(-) stoichiometry varying from 1:2 to 1:3. May regulate bicarbonate influx/efflux at the basolateral membrane of cells and regulate intracellular pH. The polypeptide is Electrogenic sodium bicarbonate cotransporter 1 (Slc4a4) (Mus musculus (Mouse)).